Here is a 1189-residue protein sequence, read N- to C-terminus: Lysine-specific demethylase hairless (1189 aa).

Disordered stretches follow at residues 1–40 (MEST…HHGP), 236–257 (HLQR…EMGA), 349–377 (EGGA…SHHT), 414–480 (AGSP…LQDP), and 505–552 (GEGG…RLST). Residues 239-254 (RAGEAERPSLHQRDGE) are compositionally biased toward basic and acidic residues. Residues 457 to 469 (KDVDSGQHDEQKG) are compositionally biased toward basic and acidic residues. The short motif at 566–570 (LCRLL) is the LXXLL motif 1 element. A C6-type zinc finger spans residues 600–625 (CSRCHHGLFNTHWRCPRCSHRLCVAC). A disordered region spans residues 702–750 (GDAGQQKESTQKTPPTPQPSCNGDTHRTKSIKEETPDSAETPAEDRAGR). Basic and acidic residues predominate over residues 725–736 (DTHRTKSIKEET). Positions 758–762 (LCELL) match the LXXLL motif 2 motif. Residues 946-1157 (DTSRVENLAA…LSAQLCHQGP (212 aa)) form the JmjC domain. Residues C1007, E1009, and H1125 each contribute to the Fe cation site.

Fe(2+) serves as cofactor. As to expression, strongest expression of isoforms 1 and 2 is seen in the small intestine, weaker expression in brain and colon, and trace expression is found in liver, pancreas, spleen, thymus, stomach, salivary gland, appendix and trachea. Isoform 1 is always the most abundant. Isoform 1 is exclusively expressed at low levels in kidney and testis. Isoform 2 is exclusively expressed at high levels in the skin.

The protein localises to the nucleus. The catalysed reaction is N(6),N(6)-dimethyl-L-lysyl(9)-[histone H3] + 2 2-oxoglutarate + 2 O2 = L-lysyl(9)-[histone H3] + 2 formaldehyde + 2 succinate + 2 CO2. Its function is as follows. Histone demethylase that specifically demethylates both mono- and dimethylated 'Lys-9' of histone H3. May act as a transcription regulator controlling hair biology (via targeting of collagens), neural activity, and cell cycle. The protein is Lysine-specific demethylase hairless (HR) of Homo sapiens (Human).